A 312-amino-acid polypeptide reads, in one-letter code: E3 ubiquitin-protein ligase RNF126-B (312 aa).

Zn(2+)-binding residues include C13, C16, C29, and C32. The C4-type zinc-finger motif lies at C13–C32. Disordered regions lie at residues P41–S63 and G96–G139. Positions S44–S55 are enriched in low complexity. Basic and acidic residues predominate over residues E102–S115. Residues P124–A134 are compositionally biased toward basic residues. The RING-type zinc-finger motif lies at C228–R269. The interval Q275–S312 is disordered. The segment covering S290–S301 has biased composition (low complexity). The span at P302–S312 shows a compositional bias: polar residues.

The protein resides in the cytoplasm. The protein localises to the nucleus. The enzyme catalyses S-ubiquitinyl-[E2 ubiquitin-conjugating enzyme]-L-cysteine + [acceptor protein]-L-lysine = [E2 ubiquitin-conjugating enzyme]-L-cysteine + N(6)-ubiquitinyl-[acceptor protein]-L-lysine.. It functions in the pathway protein modification; protein ubiquitination. Its function is as follows. E3 ubiquitin-protein ligase that mediates ubiquitination oF target proteins. Depending on the associated E2 ligase, mediates 'Lys-27'-, 'Lys-29'-, 'Lys-48'- and/or 'Lys-63'-linked polyubiquitination of substrates. Part of a BAG6-dependent quality control process ensuring that proteins of the secretory pathway that are mislocalized to the cytosol are degraded by the proteasome. Probably acts by providing the ubiquitin ligase activity associated with the BAG6 complex and be responsible for ubiquitination of the hydrophobic mislocalized proteins and their targeting to the proteasome. In Xenopus laevis (African clawed frog), this protein is E3 ubiquitin-protein ligase RNF126-B.